A 506-amino-acid polypeptide reads, in one-letter code: MDAPSRSHLASPILVANYRSLPSFMYRDSLPEAAVSPQLLALNTRLLETLEQDLAWFNSSDALEQLSGKTYYGSNLPFALAYSGHQFGGWSPVLGDGRAHVLGQLKTAADELIDVQLKGSGATPFSRGGDGRATLGAVIREYLLSEAMAGLNISTTGSLAVIATGEDVWRNGAYPGAILVRTAKSHLRVGSFQYAAVHQGPEAVKTLADFALAQYYPELSHDENPYQALLAQVIKGQAELVAQWMLVGFIHGVMNTDNSSITGETIDYGPCAFMDEFNPNKVFSSIDSQGRYAWGNQGAIAQWNMARLGETLLPLLDSDEAKALEIAQAQLGDFNRLFAEHFYQGMARKLSLDASDPELIPFVDSTLQLMTNTRVDFCQFFNALTEYHSTHREQDAGLVALFSTEAFPSLSSTPAQLLQDWLSQWQAKACDSQAALAAMIKANPKFIARNHKVEAAISAAEQNNDYSLFLDMARVLANPYVLAEQDKHYQDAPTPDQRVKQTFCGT.

ATP-binding residues include G95, G97, R98, K118, D130, G131, R181, and R188. Residue D257 is the Proton acceptor of the active site. 2 residues coordinate Mg(2+): N258 and D267. D267 contacts ATP. The disordered stretch occupies residues 487–506 (KHYQDAPTPDQRVKQTFCGT).

Belongs to the SELO family. The cofactor is Mg(2+). Requires Mn(2+) as cofactor.

The enzyme catalyses L-seryl-[protein] + ATP = 3-O-(5'-adenylyl)-L-seryl-[protein] + diphosphate. It catalyses the reaction L-threonyl-[protein] + ATP = 3-O-(5'-adenylyl)-L-threonyl-[protein] + diphosphate. It carries out the reaction L-tyrosyl-[protein] + ATP = O-(5'-adenylyl)-L-tyrosyl-[protein] + diphosphate. The catalysed reaction is L-histidyl-[protein] + UTP = N(tele)-(5'-uridylyl)-L-histidyl-[protein] + diphosphate. The enzyme catalyses L-seryl-[protein] + UTP = O-(5'-uridylyl)-L-seryl-[protein] + diphosphate. It catalyses the reaction L-tyrosyl-[protein] + UTP = O-(5'-uridylyl)-L-tyrosyl-[protein] + diphosphate. Functionally, nucleotidyltransferase involved in the post-translational modification of proteins. It can catalyze the addition of adenosine monophosphate (AMP) or uridine monophosphate (UMP) to a protein, resulting in modifications known as AMPylation and UMPylation. This chain is Protein nucleotidyltransferase YdiU, found in Shewanella denitrificans (strain OS217 / ATCC BAA-1090 / DSM 15013).